We begin with the raw amino-acid sequence, 217 residues long: Meiotically up-regulated gene 37 protein (217 aa).

Its function is as follows. Has a role in meiosis. This Schizosaccharomyces pombe (strain 972 / ATCC 24843) (Fission yeast) protein is Meiotically up-regulated gene 37 protein (mug37).